Reading from the N-terminus, the 122-residue chain is Small ribosomal subunit protein bS16 (122 aa).

Positions 81–122 are disordered; that stretch reads GLMKRDAKNNPKKGEPGEKAKERAKERAEKAAAGSTEDAAAE. Residues 83–110 are compositionally biased toward basic and acidic residues; it reads MKRDAKNNPKKGEPGEKAKERAKERAEK. Residues 111–122 are compositionally biased toward low complexity; it reads AAAGSTEDAAAE.

It belongs to the bacterial ribosomal protein bS16 family.

This chain is Small ribosomal subunit protein bS16, found in Xanthobacter autotrophicus (strain ATCC BAA-1158 / Py2).